A 560-amino-acid chain; its full sequence is DNA ligase B (560 aa).

K124 functions as the N6-AMP-lysine intermediate in the catalytic mechanism.

It belongs to the NAD-dependent DNA ligase family. LigB subfamily.

It catalyses the reaction NAD(+) + (deoxyribonucleotide)n-3'-hydroxyl + 5'-phospho-(deoxyribonucleotide)m = (deoxyribonucleotide)n+m + AMP + beta-nicotinamide D-nucleotide.. Catalyzes the formation of phosphodiester linkages between 5'-phosphoryl and 3'-hydroxyl groups in double-stranded DNA using NAD as a coenzyme and as the energy source for the reaction. The protein is DNA ligase B of Escherichia coli (strain ATCC 8739 / DSM 1576 / NBRC 3972 / NCIMB 8545 / WDCM 00012 / Crooks).